The sequence spans 920 residues: B3 domain-containing protein REM17 (920 aa).

3 DNA-binding regions (TF-B3) span residues Asn-12–Ser-105, Arg-153–Lys-250, and Cys-267–Thr-361. 3 disordered regions span residues Asp-405–Val-438, Leu-540–Ser-562, and Asp-585–His-614. A compositionally biased stretch (basic and acidic residues) spans Asn-423 to Ser-432. Residues Ser-436 to Thr-531 constitute a DNA-binding region (TF-B3 4). 2 DNA-binding regions (TF-B3) span residues Ser-616–Glu-714 and Tyr-727–Ala-823. Positions Asn-842–Asp-852 are enriched in low complexity. The segment at Asn-842 to Ile-870 is disordered.

The protein localises to the nucleus. This Arabidopsis thaliana (Mouse-ear cress) protein is B3 domain-containing protein REM17 (REM17).